Reading from the N-terminus, the 391-residue chain is Elongation factor Tu 1 (391 aa).

Residues 10-201 enclose the tr-type G domain; it reads KPHVNIGTIG…EVDNYIPTPE (192 aa). A G1 region spans residues 19–26; it reads GHVDHGKT. 19 to 26 lines the GTP pocket; that stretch reads GHVDHGKT. Mg(2+) is bound at residue Thr26. The tract at residues 55–59 is G2; sequence GITIS. A G3 region spans residues 76 to 79; that stretch reads DCPG. GTP-binding positions include 76–80 and 131–134; these read DCPGH and NKVD. The segment at 131–134 is G4; it reads NKVD. Residues 169-171 are G5; the sequence is SAL.

It belongs to the TRAFAC class translation factor GTPase superfamily. Classic translation factor GTPase family. EF-Tu/EF-1A subfamily. Monomer.

Its subcellular location is the cytoplasm. The enzyme catalyses GTP + H2O = GDP + phosphate + H(+). In terms of biological role, GTP hydrolase that promotes the GTP-dependent binding of aminoacyl-tRNA to the A-site of ribosomes during protein biosynthesis. The sequence is that of Elongation factor Tu 1 from Bartonella quintana (strain Toulouse) (Rochalimaea quintana).